The primary structure comprises 152 residues: uncharacterized protein (152 aa).

Belongs to the antirestriction protein family.

This is an uncharacterized protein from Escherichia coli (strain K12).